Reading from the N-terminus, the 228-residue chain is Lipoprotein-releasing system ATP-binding protein LolD 2 (228 aa).

In terms of domain architecture, ABC transporter spans 9–228 (RGLERVYKTE…KDGHLELQRV (220 aa)). 42–49 (GPSGSGKS) serves as a coordination point for ATP.

It belongs to the ABC transporter superfamily. Lipoprotein translocase (TC 3.A.1.125) family. As to quaternary structure, the complex is composed of two ATP-binding proteins (LolD) and two transmembrane proteins (LolC and LolE).

It localises to the cell inner membrane. In terms of biological role, part of the ABC transporter complex LolCDE involved in the translocation of mature outer membrane-directed lipoproteins, from the inner membrane to the periplasmic chaperone, LolA. Responsible for the formation of the LolA-lipoprotein complex in an ATP-dependent manner. The polypeptide is Lipoprotein-releasing system ATP-binding protein LolD 2 (Caulobacter vibrioides (strain ATCC 19089 / CIP 103742 / CB 15) (Caulobacter crescentus)).